The sequence spans 67 residues: Pepsin B (67 aa).

A propeptide spans 1 to 43 (activation peptide); sequence MERIILRKGKSIREAMEEQGVLEKFLKNRPKIDPAAKYHFNND.

Belongs to the peptidase A1 family.

It is found in the secreted. The catalysed reaction is Degradation of gelatin, little activity on hemoglobin. Specificity on B chain of insulin more restricted than that of pepsin A. Does not cleave 1-Phe-|-Val-2, 4-Gln-|-His-5 or 23-Gly-|-Phe-24.. This Sus scrofa (Pig) protein is Pepsin B (PGB).